The chain runs to 1969 residues: Cytadherence high molecular weight protein 1 (1969 aa).

Residues 148–166 (YYDENEEWVWTGYFDEDNK) form an HAT 1 repeat. The tract at residues 174–244 (KPAEVEALEE…QPESEQEGSG (71 aa)) is disordered. 2 stretches are compositionally biased toward acidic residues: residues 179–207 (EALE…EVVE) and 214–242 (QPEE…EQEG). HAT repeat units follow at residues 258–278 (YYDE…NNFV), 300–331 (AQQE…VEGY), and 333–353 (YYDE…NNFV). Residues 294–319 (QVEEYSAQQEQVQEEYEQQPEQEGSG) form a disordered region. Positions 365–393 (VSEEQYSESVSEEQEPASEEQVAEEPAQV) are disordered. Over residues 374–387 (VSEEQEPASEEQVA) the composition is skewed to acidic residues. 2 HAT repeats span residues 477 to 497 (YYDE…GMFI) and 959 to 997 (LTLV…DQNN). Residues 1000 to 1027 (SDKDSKTQKVDQLIEEFNKQEAIKKTEE) are a coiled coil. The HAT 7 repeat unit spans residues 1029–1067 (EAKKASEPFYNKYIGNKQFGYYNDKNVWIWNGYFDENDQ). Coiled coils occupy residues 1082-1190 (IEDE…FDNF), 1547-1621 (SVNQ…LALT), and 1758-1790 (NRGD…NKKV).

It is found in the cell projection. The protein localises to the attachment organelle membrane. Its function is as follows. Component of the cytoskeleton-like structure which stabilizes the shape of the wall-less Mycoplasma. This cytoskeleton-like network of accessory proteins containing HMW proteins 1 to 5 allows the proper anchoring of cytadhesin proteins in the mycoplasmal membrane at the attachment organelle. This chain is Cytadherence high molecular weight protein 1 (hlp1), found in Mycoplasmoides gallisepticum (strain R(low / passage 15 / clone 2)) (Mycoplasma gallisepticum).